A 252-amino-acid chain; its full sequence is NAC domain-containing protein 83 (252 aa).

The 147-residue stretch at 14-160 (LPPGFRFHPT…NWVLCRIFLK (147 aa)) folds into the NAC domain. Residues 110–166 (VGLKKTLVFYKGKPPHGSRTDWIMHEYRLSSSPPSSMGPTQNWVLCRIFLKKRAGNK) mediate DNA binding. 2 disordered regions span residues 165–194 (NKND…IITT) and 217–252 (LNLL…NSFR). 2 stretches are compositionally biased toward low complexity: residues 180-194 (NNNN…IITT) and 219-252 (LLPS…NSFR). Positions 213–226 (RTTDLNLLPSSPSS) are PEST-like.

As to quaternary structure, interacts with NAC007/VND4, NAC026/VND5 and NAC030/VND7. Interacts with the mungbean yellow mosaic virus (MYMV) AC1 replication-associated protein. As to expression, expressed in xylem and phloem cells in roots and inflorescence stems. Highly expressed in senescent leaves. Expressed in roots, and abscission and dehiscence tissues, such as axils of bracts and abscission zones in cauline leaves and siliques.

The protein resides in the nucleus. Transcriptional repressor that negatively regulates the expression of genes involved in xylem vessel formation. Represses the transcriptional activation activity of NAC030/VND7, which regulates protoxylem vessel differentiation by promoting immature xylem vessel-specific genes expression. Transcriptional activator that regulates the COLD-REGULATED (COR15A and COR15B) and RESPONSIVE TO DEHYDRATION (LTI78/RD29A and LTI65/RD29B) genes by binding directly to their promoters. Mediates signaling crosstalk between salt stress response and leaf aging process. May play a role in DNA replication of mungbean yellow mosaic virus. The protein is NAC domain-containing protein 83 of Arabidopsis thaliana (Mouse-ear cress).